A 545-amino-acid polypeptide reads, in one-letter code: E3 ubiquitin-protein ligase ipaH9.8 (545 aa).

Positions 1–242 (MLPINNNFSL…YHGPRIYFSM (242 aa)) are interaction with target proteins. LRR repeat units lie at residues 57-77 (NSDE…NLPA), 78-99 (QITL…PVTL), 100-117 (KKLY…VLPP), 118-139 (ALES…PDSL), 140-157 (LTMN…SLPQ), 158-179 (ALKN…SEGN), 182-203 (VVRE…ILNL), and 205-228 (NECS…QRLT). Positions 243–250 (SDGQQNTL) are linker. The interval 251 to 545 (HRPLADAVTA…SENGSQLHHS (295 aa)) is E3 ubiquitin-protein ligase catalytic domain. One can recognise an NEL domain in the interval 253–545 (PLADAVTAWF…SENGSQLHHS (293 aa)). Cys-337 acts as the Glycyl thioester intermediate in catalysis.

Belongs to the LRR-containing bacterial E3 ligase family. Also interacts with human and mouse U2AF1 (U2AF35). Ubiquitinated in the presence of host E1 ubiquitin-activating enzyme, E2 ubiquitin-conjugating enzyme and ubiquitin.

It is found in the secreted. The protein localises to the host cytoplasm. The protein resides in the host nucleus. The enzyme catalyses S-ubiquitinyl-[E2 ubiquitin-conjugating enzyme]-L-cysteine + [acceptor protein]-L-lysine = [E2 ubiquitin-conjugating enzyme]-L-cysteine + N(6)-ubiquitinyl-[acceptor protein]-L-lysine.. Its activity is regulated as follows. Exists in an autoinhibited state in the absence of substrate protein, due to interactions of the leucine-rich repeats with NEL domain. Is activated upon binding to a substrate protein. Functionally, effector E3 ubiquitin ligase that interferes with host's ubiquitination pathway and modulates the acute inflammatory responses, thus facilitating bacterial colonization within the host cell. Interacts with IKBKG (NEMO) and TNIP1 (ABIN-1), a ubiquitin-binding adapter protein, which results in TNIP1-dependent 'Lys-27'-linked polyubiquitination of IKBKG. Consequently, polyubiquitinated IKBKG undergoes proteasome-dependent degradation, which perturbs NF-kappa-B activation during bacterial infection. Mediates polyubiquitination of host U2AF1, leading to its proteasomal degradation. Catalyzes 'Lys-48'-linked polyubiquitination and subsequent degradation of a subset of host guanylate-binding proteins (GBP1, GBP2, GBP4 and GBP6), thereby suppressing host cell defense. In contrast, host GBP3 and GBP7 are not ubiquitinated by IpaH9.8. Uses UBE2D2 (UBCH5B) as an E2 ubiquitin-conjugating enzyme. The sequence is that of E3 ubiquitin-protein ligase ipaH9.8 (ipaH9.8) from Shigella flexneri serotype X (strain 2002017).